The following is a 668-amino-acid chain: Ecdysone oxidase (668 aa).

FAD-binding positions include 137–140 (NHMV), Val-270, and 536–537 (WH). His-537 acts as the Proton acceptor in catalysis.

The protein belongs to the GMC oxidoreductase family. It depends on FAD as a cofactor.

The enzyme catalyses ecdysone + O2 = 3-dehydroecdysone + H2O2. In terms of biological role, involved in the inactivation of ecdysteroid molting hormones by converting ecdysteroids into 3-dehydroecdysteroids. This chain is Ecdysone oxidase, found in Bombyx mori (Silk moth).